Reading from the N-terminus, the 103-residue chain is Large ribosomal subunit protein bL21 (103 aa).

It belongs to the bacterial ribosomal protein bL21 family. In terms of assembly, part of the 50S ribosomal subunit. Contacts protein L20.

In terms of biological role, this protein binds to 23S rRNA in the presence of protein L20. In Aeromonas salmonicida (strain A449), this protein is Large ribosomal subunit protein bL21.